A 156-amino-acid polypeptide reads, in one-letter code: Small ribosomal subunit protein uS7 (156 aa).

This sequence belongs to the universal ribosomal protein uS7 family. As to quaternary structure, part of the 30S ribosomal subunit. Contacts proteins S9 and S11.

In terms of biological role, one of the primary rRNA binding proteins, it binds directly to 16S rRNA where it nucleates assembly of the head domain of the 30S subunit. Is located at the subunit interface close to the decoding center, probably blocks exit of the E-site tRNA. The polypeptide is Small ribosomal subunit protein uS7 (Parasynechococcus marenigrum (strain WH8102)).